We begin with the raw amino-acid sequence, 137 residues long: NADH-quinone oxidoreductase subunit A 1 (137 aa).

The next 3 helical transmembrane spans lie at 14 to 34, 66 to 86, and 95 to 115; these read FAAF…VSAL, FYLV…LFAW, and WAGL…LVYL.

The protein belongs to the complex I subunit 3 family. NDH-1 is composed of 13 different subunits. Subunits NuoA, H, J, K, L, M, N constitute the membrane sector of the complex.

It localises to the cell inner membrane. It catalyses the reaction a quinone + NADH + 5 H(+)(in) = a quinol + NAD(+) + 4 H(+)(out). Its function is as follows. NDH-1 shuttles electrons from NADH, via FMN and iron-sulfur (Fe-S) centers, to quinones in the respiratory chain. The immediate electron acceptor for the enzyme in this species is believed to be ubiquinone. Couples the redox reaction to proton translocation (for every two electrons transferred, four hydrogen ions are translocated across the cytoplasmic membrane), and thus conserves the redox energy in a proton gradient. The chain is NADH-quinone oxidoreductase subunit A 1 from Pseudomonas paraeruginosa (strain DSM 24068 / PA7) (Pseudomonas aeruginosa (strain PA7)).